Reading from the N-terminus, the 577-residue chain is Arginine--tRNA ligase (577 aa).

Positions 122–132 (PNVAKEMHVGH) match the 'HIGH' region motif.

It belongs to the class-I aminoacyl-tRNA synthetase family. Monomer.

It is found in the cytoplasm. It carries out the reaction tRNA(Arg) + L-arginine + ATP = L-arginyl-tRNA(Arg) + AMP + diphosphate. The chain is Arginine--tRNA ligase from Escherichia coli O139:H28 (strain E24377A / ETEC).